Here is a 47-residue protein sequence, read N- to C-terminus: LLGRCKVKSNRFNGPCLTDTHCSTVCRGEGYKGGDCHGLRRRCMCLC.

4 cysteine pairs are disulfide-bonded: Cys5-Cys47, Cys16-Cys36, Cys22-Cys43, and Cys26-Cys45.

Belongs to the DEFL family.

Functionally, fabatins have antibacterial activity against Gram-positive and Gram-negative bacteria. High activity against P.aeruginosa. No activity against S.cerevisiae and C.albicans. In Vicia faba (Broad bean), this protein is Defensin-like protein 2.